The following is a 63-amino-acid chain: MAQEQTRRGGGGDDDEFTSSTSVGQERREKLTEETDDLLDEIDDVLEENAEDFVRAYVQKGGQ.

Residues 1 to 11 show a composition bias toward basic and acidic residues; it reads MAQEQTRRGGG. Residues 1 to 36 form a disordered region; that stretch reads MAQEQTRRGGGGDDDEFTSSTSVGQERREKLTEETD. Positions 20–57 are ARC ATPase binding; it reads STSVGQERREKLTEETDDLLDEIDDVLEENAEDFVRAY. Residues 23-51 are a coiled coil; the sequence is VGQERREKLTEETDDLLDEIDDVLEENAE. Gln-63 bears the Deamidated glutamine mark. Gln-63 is covalently cross-linked (Isoglutamyl lysine isopeptide (Gln-Lys) (interchain with K-? in acceptor proteins)).

Belongs to the prokaryotic ubiquitin-like protein family. In terms of assembly, strongly interacts with the proteasome-associated ATPase ARC through a hydrophobic interface; the interacting region of Pup lies in its C-terminal half. There is one Pup binding site per ARC hexamer ring. Post-translationally, is modified by deamidation of its C-terminal glutamine to glutamate by the deamidase Dop, a prerequisite to the subsequent pupylation process.

It participates in protein degradation; proteasomal Pup-dependent pathway. In terms of biological role, protein modifier that is covalently attached to lysine residues of substrate proteins, thereby targeting them for proteasomal degradation. The tagging system is termed pupylation. The sequence is that of Prokaryotic ubiquitin-like protein Pup from Mycobacterium leprae (strain Br4923).